The following is a 34-amino-acid chain: Beta/mu-theraphotoxin-Pe1a (34 aa).

3 disulfide bridges follow: Cys-2/Cys-16, Cys-9/Cys-21, and Cys-15/Cys-28.

It belongs to the neurotoxin 10 (Hwtx-1) family. 54 (ProTx-1) subfamily. Expressed by the venom gland.

The protein resides in the secreted. Functionally, ion channel impairing toxin that inhibits voltage-gated sodium channels. The recombinantly expressed toxin shows a weak activity against Nav1.7/SCN9A (25% inhibition at 10 uM), and shifts the voltage dependence of channel activation to more depolarized potentials. This Phormingochilus everetti (Malaysian purple earth tiger tarantula) protein is Beta/mu-theraphotoxin-Pe1a.